A 281-amino-acid polypeptide reads, in one-letter code: Pantothenate synthetase (281 aa).

30 to 37 (MGNLHQGH) is a binding site for ATP. Catalysis depends on H37, which acts as the Proton donor. Q61 lines the (R)-pantoate pocket. Beta-alanine is bound at residue Q61. Residue 149 to 152 (GNKD) participates in ATP binding. Q155 lines the (R)-pantoate pocket. ATP-binding positions include I178 and 186–189 (MSSR).

This sequence belongs to the pantothenate synthetase family. In terms of assembly, homodimer.

The protein resides in the cytoplasm. It carries out the reaction (R)-pantoate + beta-alanine + ATP = (R)-pantothenate + AMP + diphosphate + H(+). The protein operates within cofactor biosynthesis; (R)-pantothenate biosynthesis; (R)-pantothenate from (R)-pantoate and beta-alanine: step 1/1. Its function is as follows. Catalyzes the condensation of pantoate with beta-alanine in an ATP-dependent reaction via a pantoyl-adenylate intermediate. The polypeptide is Pantothenate synthetase (Shewanella baltica (strain OS155 / ATCC BAA-1091)).